Reading from the N-terminus, the 227-residue chain is Small ribosomal subunit protein uS3 (227 aa).

Positions 39-107 (VREFLMKKLE…PVHINIEEIR (69 aa)) constitute a KH type-2 domain.

It belongs to the universal ribosomal protein uS3 family. As to quaternary structure, part of the 30S ribosomal subunit. Forms a tight complex with proteins S10 and S14.

Binds the lower part of the 30S subunit head. Binds mRNA in the 70S ribosome, positioning it for translation. The polypeptide is Small ribosomal subunit protein uS3 (Hahella chejuensis (strain KCTC 2396)).